A 268-amino-acid chain; its full sequence is Hydroxyethylthiazole kinase (268 aa).

Methionine 47 is a substrate binding site. Lysine 123 and threonine 170 together coordinate ATP. Alanine 196 contributes to the substrate binding site.

It belongs to the Thz kinase family. It depends on Mg(2+) as a cofactor.

The catalysed reaction is 5-(2-hydroxyethyl)-4-methylthiazole + ATP = 4-methyl-5-(2-phosphooxyethyl)-thiazole + ADP + H(+). The protein operates within cofactor biosynthesis; thiamine diphosphate biosynthesis; 4-methyl-5-(2-phosphoethyl)-thiazole from 5-(2-hydroxyethyl)-4-methylthiazole: step 1/1. Its function is as follows. Catalyzes the phosphorylation of the hydroxyl group of 4-methyl-5-beta-hydroxyethylthiazole (THZ). The sequence is that of Hydroxyethylthiazole kinase from Finegoldia magna (strain ATCC 29328 / DSM 20472 / WAL 2508) (Peptostreptococcus magnus).